A 72-amino-acid chain; its full sequence is UPF0154 protein RBAM_017710 (72 aa).

Residues 4–24 form a helical membrane-spanning segment; that stretch reads WVGILVGVVALLIGVALGFFI.

Belongs to the UPF0154 family.

It localises to the cell membrane. This chain is UPF0154 protein RBAM_017710, found in Bacillus velezensis (strain DSM 23117 / BGSC 10A6 / LMG 26770 / FZB42) (Bacillus amyloliquefaciens subsp. plantarum).